The primary structure comprises 827 residues: MGKKKKKRKSSAFKIILNVFLSIFLVAGVAFGGIVFAMIKTAPPLNVQQVLTFDEPSILYDDKGQYMDKVITNEQRIVVDYKNVPQNLKNAFVSIEDERFYKHHGVDIKRFTGVILINVTNKIKRSSKLQGASTLTQQLIKNTVLSSEVSIKRKVQEMYLSIQLEKELSKDEILGAYMNSIFLGGNALGVEAASKQYFNKSVKDLSLIECAFIAGVPQSPSVYYPYSSASKKNPSIYLNRTKTVLYKMLDNGYITQNDYNKALKDLDSKKLAFAKPSAPSNKLAYEWFSIPAIEQVKKDLKTQYKYDDKQIHNLLVNGGLKIYTTMNKNLQDKTQNTINDAYYLNSYKSNGIIYPQASAVIMDYHNGEVKTIVGGRGDQPARSYNRAASYNYLRPAGSSIKPLTVYSAAIDSKKATAATGFEDSPIPNNIGRKYSSGAPYNPRNTPDIYYGYVNVREALMRSINVVAVKLVDKIGLNTSIQYAEKFGIPIDQHDRSSIASLSLGELHKGTNPLIMAQAYGVFGNNGTYTEAKLYTKVVDRTGKVLLEPKTNTKKVLSPEAAFITYDMLQGPVSESGTGPQANFGNMEVRGKTGTSSDMKNLWFCGLTPYYSAAVWIGNDNSSTVDGVYSSTAARLWGDIMKEFHVNLPYKQVQKPASVVTANVDRISGKLPTQLSYRDPRGSTVYNEFFINGTIPTEYDDIHVEAQINKLTGKLASKFTPSFLVESRVFLRRDYSPGVELLDQQWLLPYSIDEGGSLPPTEEKNNSNTRDKNKDKNKDKDKNKNKDKNPSQDKPNNNNNNNNNDNNNNTKPPENDSNQNHEDNKNKQ.

Over 1–18 (MGKKKKKRKSSAFKIILN) the chain is Cytoplasmic. A helical; Signal-anchor for type II membrane protein transmembrane segment spans residues 19–39 (VFLSIFLVAGVAFGGIVFAMI). Over 40-827 (KTAPPLNVQQ…QNHEDNKNKQ (788 aa)) the chain is Extracellular. Residues 57–229 (SILYDDKGQY…PSVYYPYSSA (173 aa)) form a transglycosylase region. The active-site Proton donor; for transglycosylase activity is Glu96. A transpeptidase region spans residues 357–641 (ASAVIMDYHN…AARLWGDIMK (285 aa)). Ser398 acts as the Acyl-ester intermediate; for transpeptidase activity in catalysis. The segment at 755–827 (GSLPPTEEKN…QNHEDNKNKQ (73 aa)) is disordered. The segment covering 760–790 (TEEKNNSNTRDKNKDKNKDKDKNKNKDKNPS) has biased composition (basic and acidic residues). Positions 791–817 (QDKPNNNNNNNNNDNNNNTKPPENDSN) are enriched in low complexity. Basic and acidic residues predominate over residues 818 to 827 (QNHEDNKNKQ).

The protein in the N-terminal section; belongs to the glycosyltransferase 51 family. This sequence in the C-terminal section; belongs to the transpeptidase family.

It localises to the cell membrane. The enzyme catalyses [GlcNAc-(1-&gt;4)-Mur2Ac(oyl-L-Ala-gamma-D-Glu-L-Lys-D-Ala-D-Ala)](n)-di-trans,octa-cis-undecaprenyl diphosphate + beta-D-GlcNAc-(1-&gt;4)-Mur2Ac(oyl-L-Ala-gamma-D-Glu-L-Lys-D-Ala-D-Ala)-di-trans,octa-cis-undecaprenyl diphosphate = [GlcNAc-(1-&gt;4)-Mur2Ac(oyl-L-Ala-gamma-D-Glu-L-Lys-D-Ala-D-Ala)](n+1)-di-trans,octa-cis-undecaprenyl diphosphate + di-trans,octa-cis-undecaprenyl diphosphate + H(+). It catalyses the reaction Preferential cleavage: (Ac)2-L-Lys-D-Ala-|-D-Ala. Also transpeptidation of peptidyl-alanyl moieties that are N-acyl substituents of D-alanine.. The protein operates within cell wall biogenesis; peptidoglycan biosynthesis. In terms of biological role, cell wall formation. Synthesis of cross-linked peptidoglycan from the lipid intermediates. The enzyme has a penicillin-insensitive transglycosylase N-terminal domain (formation of linear glycan strands) and a penicillin-sensitive transpeptidase C-terminal domain (cross-linking of the peptide subunits). The chain is Penicillin-binding protein 1A (pbpA) from Clostridium botulinum (strain Langeland / NCTC 10281 / Type F).